The primary structure comprises 1079 residues: Integrator complex subunit 3 homolog (1079 aa).

Disordered stretches follow at residues 539 to 574, 925 to 949, and 1010 to 1079; these read ESSE…DDLP, YPSS…TPSA, and AVGR…NDSD. Over residues 938–949 the composition is skewed to low complexity; it reads KGSSAASSTPSA. Residues S1049, S1050, S1054, and S1055 each carry the phosphoserine modification. Residues 1062–1073 show a composition bias toward basic residues; it reads HKITQAAKKRKK.

The protein belongs to the Integrator subunit 3 family. In terms of assembly, belongs to the multiprotein complex Integrator, at least composed of IntS1, IntS2, IntS3, IntS4, omd/IntS5, IntS6, defl/IntS7, IntS8, IntS9, IntS10, IntS11, IntS12, asun/IntS13, IntS14 and IntS15. The core complex associates with protein phosphatase 2A subunits mts/PP2A and Pp2A-29B, to form the Integrator-PP2A (INTAC) complex.

The protein localises to the nucleus. It localises to the cytoplasm. Its function is as follows. Component of the integrator complex, a multiprotein complex that terminates RNA polymerase II (Pol II) transcription in the promoter-proximal region of genes. The integrator complex provides a quality checkpoint during transcription elongation by driving premature transcription termination of transcripts that are unfavorably configured for transcriptional elongation: the complex terminates transcription by (1) catalyzing dephosphorylation of the C-terminal domain (CTD) of Pol II subunit Polr2A/Rbp1 and Spt5, and (2) degrading the exiting nascent RNA transcript via endonuclease activity. The integrator complex is also involved in the 3'-end processing of the U7 snRNA, and also the spliceosomal snRNAs U1, U2, U4 and U5. The protein is Integrator complex subunit 3 homolog (IntS3) of Drosophila virilis (Fruit fly).